A 418-amino-acid polypeptide reads, in one-letter code: Voltage-gated ClC-type chloride channel ClcB (418 aa).

10 helical membrane passes run 5-25 (LLIA…FRHA), 54-74 (LLTP…WQKF), 146-166 (LWIA…PLAG), 168-188 (LFIA…PVII), 222-242 (ALII…LTLM), 258-278 (WQLA…PAVW), 291-311 (APPL…AVLA), 316-336 (GAPG…GMLY), 352-372 (LLLG…APIM), and 380-400 (MTGE…ASVI).

It belongs to the chloride channel (TC 2.A.49) family. ClcB subfamily.

The protein localises to the cell inner membrane. Its function is as follows. Probably acts as an electrical shunt for an outwardly-directed proton pump that is linked to amino acid decarboxylation, as part of the extreme acid resistance (XAR) response. The chain is Voltage-gated ClC-type chloride channel ClcB from Escherichia coli O127:H6 (strain E2348/69 / EPEC).